A 160-amino-acid polypeptide reads, in one-letter code: Transcription antitermination protein NusB (160 aa).

It belongs to the NusB family.

Its function is as follows. Involved in transcription antitermination. Required for transcription of ribosomal RNA (rRNA) genes. Binds specifically to the boxA antiterminator sequence of the ribosomal RNA (rrn) operons. This Rhizobium etli (strain CIAT 652) protein is Transcription antitermination protein NusB.